Consider the following 108-residue polypeptide: Histone H4 (108 aa).

The disordered stretch occupies residues 1-24 (MTGRGKGGKVLSLGGKGGKGAKRH). The DNA-binding element occupies 17 to 21 (GGKGA).

It belongs to the histone H4 family. In terms of assembly, the nucleosome is a histone octamer containing two molecules each of H2A, H2B, H3 and H4 assembled in one H3-H4 heterotetramer and two H2A-H2B heterodimers. The octamer wraps approximately 147 bp of DNA.

Its subcellular location is the nucleus. The protein localises to the chromosome. Its function is as follows. Core component of nucleosome. Nucleosomes wrap and compact DNA into chromatin, limiting DNA accessibility to the cellular machineries which require DNA as a template. Histones thereby play a central role in transcription regulation, DNA repair, DNA replication and chromosomal stability. DNA accessibility is regulated via a complex set of post-translational modifications of histones, also called histone code, and nucleosome remodeling. The chain is Histone H4 from Mastigamoeba balamuthi (Phreatamoeba balamuthi).